The chain runs to 371 residues: Collectin-46 (371 aa).

A signal peptide spans 1 to 20 (MLLLPLSVLLLLTQPWRSLG). The disordered stretch occupies residues 43-215 (PEGGLPGRDG…ERGAKGESGL (173 aa)). In terms of domain architecture, Collagen-like spans 46–216 (GLPGRDGQDG…RGAKGESGLA (171 aa)). Residues 51–65 (DGQDGREGPQGEKGD) show a composition bias toward basic and acidic residues. N-linked (GlcNAc...) asparagine glycosylation occurs at Asn90. Residues 113-128 (PAGREGPSGKQGSMGP) are compositionally biased toward low complexity. Over residues 139–148 (GPKGGMGAPG) the composition is skewed to gly residues. Residues 170–191 (APGSAGVAGPAGAIGPQGPSGA) show a composition bias toward low complexity. Over residues 198 to 210 (KGDRGDPGERGAK) the composition is skewed to basic and acidic residues. The short motif at 201–203 (RGD) is the Cell attachment site element. The C-type lectin domain maps to 273–371 (QLCREAKGQL…SEPLLVICEF (99 aa)). Intrachain disulfides connect Cys275-Cys369 and Cys347-Cys361.

The protein belongs to the SFTPD family. In terms of assembly, oligomeric complex of 4 set of homotrimers. Hydroxylated. As to expression, highly expressed in thymus and liver.

The protein resides in the secreted. In Bos taurus (Bovine), this protein is Collectin-46 (CL46).